The primary structure comprises 215 residues: Peroxiredoxin (215 aa).

Residues 6–161 (PLIGEEFPRV…ILRAVKALQT (156 aa)) enclose the Thioredoxin domain. Cys48 functions as the Cysteine sulfenic acid (-SOH) intermediate in the catalytic mechanism. Arg124 serves as a coordination point for substrate. The cysteines at positions 205 and 211 are disulfide-linked.

The protein belongs to the peroxiredoxin family. Prx6 subfamily. Homodecamer. Pentamer of dimers that assemble into a ring structure.

The protein resides in the cytoplasm. The enzyme catalyses a hydroperoxide + [thioredoxin]-dithiol = an alcohol + [thioredoxin]-disulfide + H2O. Functionally, thiol-specific peroxidase that catalyzes the reduction of hydrogen peroxide and organic hydroperoxides to water and alcohols, respectively. Plays a role in cell protection against oxidative stress by detoxifying peroxides. In Thermotoga maritima (strain ATCC 43589 / DSM 3109 / JCM 10099 / NBRC 100826 / MSB8), this protein is Peroxiredoxin.